We begin with the raw amino-acid sequence, 200 residues long: NAD(P)H dehydrogenase (quinone) (200 aa).

A Flavodoxin-like domain is found at 7–199; the sequence is LAIVFYSSTG…RQVELTAKLL (193 aa). Residues 13–18, 86–88, 121–127, and His142 contribute to the FMN site; these read SSTGTG, TRF, and SAQNVNG.

It belongs to the WrbA family. In terms of assembly, homotetramer. The cofactor is FMN.

The enzyme catalyses a quinone + NADH + H(+) = a quinol + NAD(+). The catalysed reaction is a quinone + NADPH + H(+) = a quinol + NADP(+). The sequence is that of NAD(P)H dehydrogenase (quinone) from Deinococcus radiodurans (strain ATCC 13939 / DSM 20539 / JCM 16871 / CCUG 27074 / LMG 4051 / NBRC 15346 / NCIMB 9279 / VKM B-1422 / R1).